Consider the following 425-residue polypeptide: Probable isoprenylcysteine alpha-carbonyl methylesterase ICMEL1 (425 aa).

Residues 1-10 show a composition bias toward basic and acidic residues; it reads MQVELADRAA. Residues 1–42 are disordered; the sequence is MQVELADRAAARPSETGEAPPSSPAAAAAASAAAEDAPLLPG. The span at 24–34 shows a compositional bias: low complexity; sequence PAAAAAASAAA. Transmembrane regions (helical) follow at residues 99–119 and 154–174; these read FLAL…VVYY and VVAF…GALL. Residues 160 to 162 and 231 to 233 contribute to the substrate site; these read GGA and QSA. Residues serine 232, aspartate 334, and histidine 366 contribute to the active site.

The protein belongs to the AB hydrolase superfamily. Isoprenylcysteine methylesterase family.

It localises to the endoplasmic reticulum membrane. The protein resides in the golgi apparatus membrane. The enzyme catalyses [protein]-C-terminal S-[(2E,6E)-farnesyl]-L-cysteine methyl ester + H2O = [protein]-C-terminal S-[(2E,6E)-farnesyl]-L-cysteine + methanol + H(+). Its function is as follows. Catalyzes the demethylation of isoprenylcysteine methylesters. This is Probable isoprenylcysteine alpha-carbonyl methylesterase ICMEL1 (IMCEL1) from Oryza sativa subsp. japonica (Rice).